A 420-amino-acid chain; its full sequence is Dynein axonemal assembly factor 4 (420 aa).

The CS domain occupies 3–87 (LQVSDYSWQQ…KEAAMWETLS (85 aa)). The interval 7–103 (DYSWQQTKTA…ETMQRIREKS (97 aa)) is mediates interaction with ESR1 and STUB1. TPR repeat units follow at residues 290 to 323 (PEWL…NNKM), 324 to 357 (PLLY…LMPP), and 366 to 399 (MKAH…DPSN).

As to quaternary structure, interacts with ZMYND10. Interacts with STUB1. Interacts with ESR1 and ESR2. Interacts with DNAAF2. Interacts with CCT3, CCT4, CCT5 and CCT8. Interacts with DNAAF6/PIH1D3.

It is found in the nucleus. The protein localises to the cytoplasm. Its subcellular location is the cell projection. It localises to the neuron projection. The protein resides in the dynein axonemal particle. Involved in neuronal migration during development of the cerebral neocortex. May regulate the stability and proteasomal degradation of the estrogen receptors that play an important role in neuronal differentiation, survival and plasticity. Axonemal dynein assembly factor required for ciliary motility. The polypeptide is Dynein axonemal assembly factor 4 (Pongo pygmaeus (Bornean orangutan)).